A 176-amino-acid chain; its full sequence is Ferredoxin-type protein NapF (176 aa).

2 consecutive 4Fe-4S ferredoxin-type domains span residues 39–68 and 71–100; these read VENS…KGDA and PEVR…PRDQ. [4Fe-4S] cluster is bound by residues Cys-48, Cys-51, Cys-54, Cys-58, Cys-80, Cys-83, Cys-86, Cys-90, Cys-113, Cys-121, Cys-124, Cys-128, Cys-152, Cys-155, Cys-158, and Cys-162. 4Fe-4S ferredoxin-type domains follow at residues 119–138 and 143–172; these read IECR…FKLQ and AQPL…MNDL.

The protein belongs to the NapF family. Interacts with the cytoplasmic NapA precursor. Requires [4Fe-4S] cluster as cofactor.

Its subcellular location is the cytoplasm. Its function is as follows. Could be involved in the maturation of NapA, the catalytic subunit of the periplasmic nitrate reductase, before its export into the periplasm. The sequence is that of Ferredoxin-type protein NapF from Haemophilus influenzae (strain ATCC 51907 / DSM 11121 / KW20 / Rd).